The primary structure comprises 365 residues: 2-aminoethylphosphonate--pyruvate transaminase (365 aa).

Lys-194 carries the post-translational modification N6-(pyridoxal phosphate)lysine.

It belongs to the class-V pyridoxal-phosphate-dependent aminotransferase family. PhnW subfamily. In terms of assembly, homodimer. It depends on pyridoxal 5'-phosphate as a cofactor.

It carries out the reaction (2-aminoethyl)phosphonate + pyruvate = phosphonoacetaldehyde + L-alanine. Its function is as follows. Involved in phosphonate degradation. The protein is 2-aminoethylphosphonate--pyruvate transaminase of Bacillus mycoides (strain KBAB4) (Bacillus weihenstephanensis).